A 92-amino-acid polypeptide reads, in one-letter code: Small ribosomal subunit protein uS19 (92 aa).

It belongs to the universal ribosomal protein uS19 family.

Protein S19 forms a complex with S13 that binds strongly to the 16S ribosomal RNA. The sequence is that of Small ribosomal subunit protein uS19 from Polaromonas sp. (strain JS666 / ATCC BAA-500).